The following is a 1414-amino-acid chain: DNA-directed RNA polymerase subunit beta' (1414 aa).

Zn(2+) is bound by residues C70, C72, C85, and C88. Mg(2+)-binding residues include D460, D462, and D464. Zn(2+) contacts are provided by C815, C889, C896, and C899. The tract at residues 1395–1414 (EAEAQFADVSSTPDSDTDAS) is disordered.

It belongs to the RNA polymerase beta' chain family. In terms of assembly, the RNAP catalytic core consists of 2 alpha, 1 beta, 1 beta' and 1 omega subunit. When a sigma factor is associated with the core the holoenzyme is formed, which can initiate transcription. Requires Mg(2+) as cofactor. The cofactor is Zn(2+).

The enzyme catalyses RNA(n) + a ribonucleoside 5'-triphosphate = RNA(n+1) + diphosphate. DNA-dependent RNA polymerase catalyzes the transcription of DNA into RNA using the four ribonucleoside triphosphates as substrates. This Janthinobacterium sp. (strain Marseille) (Minibacterium massiliensis) protein is DNA-directed RNA polymerase subunit beta'.